A 106-amino-acid polypeptide reads, in one-letter code: Iron-sulfur cluster assembly protein CyaY (106 aa).

This sequence belongs to the frataxin family.

Involved in iron-sulfur (Fe-S) cluster assembly. May act as a regulator of Fe-S biogenesis. This chain is Iron-sulfur cluster assembly protein CyaY, found in Salmonella heidelberg (strain SL476).